A 305-amino-acid chain; its full sequence is Glycerol-3-phosphate dehydrogenase [NAD(P)+] (305 aa).

3 residues coordinate NADPH: Trp-11, Arg-31, and Lys-79. Positions 79 and 107 each coordinate sn-glycerol 3-phosphate. Ala-111 lines the NADPH pocket. Residues Lys-162, Asp-215, Ser-225, Arg-226, and Asn-227 each coordinate sn-glycerol 3-phosphate. Lys-162 serves as the catalytic Proton acceptor. Residue Arg-226 coordinates NADPH. An NADPH-binding site is contributed by Glu-252.

Belongs to the NAD-dependent glycerol-3-phosphate dehydrogenase family.

The protein localises to the cytoplasm. The enzyme catalyses sn-glycerol 3-phosphate + NAD(+) = dihydroxyacetone phosphate + NADH + H(+). It carries out the reaction sn-glycerol 3-phosphate + NADP(+) = dihydroxyacetone phosphate + NADPH + H(+). The protein operates within membrane lipid metabolism; glycerophospholipid metabolism. Catalyzes the reduction of the glycolytic intermediate dihydroxyacetone phosphate (DHAP) to sn-glycerol 3-phosphate (G3P), the key precursor for phospholipid synthesis. In Gloeobacter violaceus (strain ATCC 29082 / PCC 7421), this protein is Glycerol-3-phosphate dehydrogenase [NAD(P)+].